Reading from the N-terminus, the 313-residue chain is tRNA uridine(34) hydroxylase (313 aa).

The region spanning 127–225 is the Rhodanese domain; it reads SDPDTILIDT…YLETVPEEES (99 aa). Residue C185 is the Cysteine persulfide intermediate of the active site.

This sequence belongs to the TrhO family.

The enzyme catalyses uridine(34) in tRNA + AH2 + O2 = 5-hydroxyuridine(34) in tRNA + A + H2O. Functionally, catalyzes oxygen-dependent 5-hydroxyuridine (ho5U) modification at position 34 in tRNAs. The protein is tRNA uridine(34) hydroxylase of Gluconobacter oxydans (strain 621H) (Gluconobacter suboxydans).